The following is a 152-amino-acid chain: Superoxide dismutase [Cu-Zn] (152 aa).

Cu cation contacts are provided by His45, His47, and His62. Cysteines 56 and 145 form a disulfide. Zn(2+) is bound by residues His62, His70, His79, and Asp82. Position 119 (His119) interacts with Cu cation.

This sequence belongs to the Cu-Zn superoxide dismutase family. Homodimer. Cu cation is required as a cofactor. Requires Zn(2+) as cofactor.

The protein resides in the cytoplasm. It carries out the reaction 2 superoxide + 2 H(+) = H2O2 + O2. In terms of biological role, destroys radicals which are normally produced within the cells and which are toxic to biological systems. The protein is Superoxide dismutase [Cu-Zn] (SODCC) of Nicotiana plumbaginifolia (Leadwort-leaved tobacco).